A 545-amino-acid polypeptide reads, in one-letter code: Inosine-5'-monophosphate dehydrogenase (545 aa).

CBS domains are found at residues 138-194 (MITD…DYDT) and 201-258 (MTKE…PDAT). Residues D295 and 347–349 (GIG) contribute to the NAD(+) site. Residues G349 and G351 each coordinate K(+). S352 provides a ligand contact to IMP. C354 contributes to the K(+) binding site. The active-site Thioimidate intermediate is the C354. IMP is bound by residues 387-389 (DGG), 410-411 (GG), and 434-438 (YRGMG). Catalysis depends on R455, which acts as the Proton acceptor. Position 470 (E470) interacts with IMP. K(+)-binding residues include E524, S525, and H526.

It belongs to the IMPDH/GMPR family. Homotetramer. Requires K(+) as cofactor.

The catalysed reaction is IMP + NAD(+) + H2O = XMP + NADH + H(+). It functions in the pathway purine metabolism; XMP biosynthesis via de novo pathway; XMP from IMP: step 1/1. Mycophenolic acid (MPA) is a non-competitive inhibitor that prevents formation of the closed enzyme conformation by binding to the same site as the amobile flap. In contrast, mizoribine monophosphate (MZP) is a competitive inhibitor that induces the closed conformation. MPA is a potent inhibitor of mammalian IMPDHs but a poor inhibitor of the bacterial enzymes. MZP is a more potent inhibitor of bacterial IMPDH. In terms of biological role, catalyzes the conversion of inosine 5'-phosphate (IMP) to xanthosine 5'-phosphate (XMP), the first committed and rate-limiting step in the de novo synthesis of guanine nucleotides, and therefore plays an important role in the regulation of cell growth. In Bifidobacterium longum (strain NCC 2705), this protein is Inosine-5'-monophosphate dehydrogenase.